The primary structure comprises 254 residues: Type III pantothenate kinase (254 aa).

7-14 (DIGNTRLK) is a binding site for ATP. Residues tyrosine 97 and 104 to 107 (GSDR) contribute to the substrate site. The active-site Proton acceptor is aspartate 106. Threonine 134 is an ATP binding site. Threonine 184 lines the substrate pocket.

The protein belongs to the type III pantothenate kinase family. In terms of assembly, homodimer. Requires NH4(+) as cofactor. K(+) serves as cofactor.

It localises to the cytoplasm. The catalysed reaction is (R)-pantothenate + ATP = (R)-4'-phosphopantothenate + ADP + H(+). The protein operates within cofactor biosynthesis; coenzyme A biosynthesis; CoA from (R)-pantothenate: step 1/5. Catalyzes the phosphorylation of pantothenate (Pan), the first step in CoA biosynthesis. The chain is Type III pantothenate kinase from Methylibium petroleiphilum (strain ATCC BAA-1232 / LMG 22953 / PM1).